The sequence spans 702 residues: Ferrioxamine B receptor (702 aa).

The signal sequence occupies residues 1–30 (MPLEMFMFATTRMALLIGGAIGGATFPLFA). A TBDR plug domain is found at 55 to 168 (PDIETPQSVS…PGGIVALTSR (114 aa)). A TBDR beta-barrel domain is found at 173–702 (DAGGEVKLFA…SIVGSVSWAF (530 aa)).

The protein belongs to the TonB-dependent receptor family.

It localises to the cell outer membrane. Functionally, ferrioxamine binding and uptake, in association with the TonB protein. May play a role in intestinal colonization. The chain is Ferrioxamine B receptor (foxA) from Salmonella typhimurium (strain SL1344).